Reading from the N-terminus, the 217-residue chain is Frataxin, mitochondrial (217 aa).

Residues 1 to 42 (MWTLGRRSVASFLPRSALPGFAPTRAGAPRPAKDLSLSGLPG) constitute a mitochondrion transit peptide.

The protein belongs to the frataxin family. In terms of assembly, component of the mitochondrial core iron-sulfur cluster (ISC) complex composed of NFS1, LYRM4, NDUFAB1, ISCU, FXN, and FDX2; this complex is a heterohexamer containing two copies of each monomer. Homodimer. Monomer (probable predominant form). Oligomer. Monomers and polymeric aggregates of &gt;1 MDa have been isolated from mitochondria. A small fraction of heterologous overexpressed recombinant frataxin forms high-molecular weight aggregates that incorporate iron. Interacts with LYRM4. Interacts (via ferrous form) with ISCU; the interaction is possible when both are bound to the dimeric form of the cysteine desulfurase complex (NFS1:LYRM4) and the interaction enhances FXN interaction to the dimeric form of the cysteine desulfurase complex (NFS1:LYRM4). Interacts with FECH; one iron-bound FXN monomer seems to interact with a FECH homodimer. Interacts with SDHA and SDHB. Interacts with ACO2; the interaction is dependent on citrate. Interacts with HSPA9. Interacts with ACO1. Interacts with ISCU (cytoplasmic form). Post-translationally, processed in two steps by mitochondrial processing peptidase (MPP). MPP first cleaves the precursor to intermediate form and subsequently converts the intermediate to yield frataxin mature form (frataxin(81-210)) which is the predominant form. The additional forms, frataxin(56-210) and frataxin(78-210), seem to be produced when the normal maturation process is impaired; their physiological relevance is unsure.

The protein resides in the mitochondrion. It is found in the cytoplasm. The protein localises to the cytosol. The catalysed reaction is 4 Fe(2+) + O2 + 4 H(+) = 4 Fe(3+) + 2 H2O. Functionally, functions as an activator of persulfide transfer to the scaffoding protein ISCU as component of the core iron-sulfur cluster (ISC) assembly complex and participates to the [2Fe-2S] cluster assembly. Accelerates sulfur transfer from NFS1 persulfide intermediate to ISCU and to small thiols such as L-cysteine and glutathione leading to persulfuration of these thiols and ultimately sulfide release. Binds ferrous ion and is released from FXN upon the addition of both L-cysteine and reduced FDX2 during [2Fe-2S] cluster assembly. The core iron-sulfur cluster (ISC) assembly complex is involved in the de novo synthesis of a [2Fe-2S] cluster, the first step of the mitochondrial iron-sulfur protein biogenesis. This process is initiated by the cysteine desulfurase complex (NFS1:LYRM4:NDUFAB1) that produces persulfide which is delivered on the scaffold protein ISCU in a FXN-dependent manner. Then this complex is stabilized by FDX2 which provides reducing equivalents to accomplish the [2Fe-2S] cluster assembly. Finally, the [2Fe-2S] cluster is transferred from ISCU to chaperone proteins, including HSCB, HSPA9 and GLRX5. May play a role in the protection against iron-catalyzed oxidative stress through its ability to catalyze the oxidation of Fe(2+) to Fe(3+); the oligomeric form but not the monomeric form has in vitro ferroxidase activity. May be able to store large amounts of iron in the form of a ferrihydrite mineral by oligomerization; however, the physiological relevance is unsure as reports are conflicting and the function has only been shown using heterologous overexpression systems. May function as an iron chaperone protein that protects the aconitase [4Fe-4S]2+ cluster from disassembly and promotes enzyme reactivation. May play a role as a high affinity iron binding partner for FECH that is capable of both delivering iron to ferrochelatase and mediating the terminal step in mitochondrial heme biosynthesis. In terms of biological role, modulates the RNA-binding activity of ACO1. May be involved in the cytoplasmic iron-sulfur protein biogenesis. May contribute to oxidative stress resistance and overall cell survival. This is Frataxin, mitochondrial from Bos taurus (Bovine).